Reading from the N-terminus, the 253-residue chain is Major prion protein (253 aa).

An N-terminal signal peptide occupies residues 1-22; sequence MANLGCWMLVLFVATWSDLGLC. The interaction with GRB2, ERI3 and SYN1 stretch occupies residues 23 to 230; sequence KKRPKPGGWN…ESQAYYQRGS (208 aa). Positions 26–108 are disordered; that stretch reads PKPGGWNTGG…WHKPSKPKTS (83 aa). 5 repeat units span residues 51–59, 60–67, 68–75, 76–83, and 84–91. Residues 51 to 91 form a 5 X 8 AA tandem repeats of P-H-G-G-G-W-G-Q region; sequence PQGGGGWGQPHGGGWGQPHGGGWGQPHGGGWGQPHGGGWGQ. Gly residues predominate over residues 52-95; that stretch reads QGGGGWGQPHGGGWGQPHGGGWGQPHGGGWGQPHGGGWGQGGGT. The Cu(2+) site is built by His61, Gly62, Gly63, His69, Gly70, Gly71, His77, Gly78, Gly79, His85, Gly86, and Gly87. Positions 98–108 are enriched in basic residues; it reads QWHKPSKPKTS. Cys179 and Cys214 are oxidised to a cystine. Asn181 and Asn197 each carry an N-linked (GlcNAc...) asparagine glycan. The GPI-anchor amidated serine moiety is linked to residue Ser230. A propeptide spans 231–253 (removed in mature form); that stretch reads SMVLFSSPPVILLISFLIFLIVG.

Belongs to the prion family. Monomer and homodimer. Has a tendency to aggregate into amyloid fibrils containing a cross-beta spine, formed by a steric zipper of superposed beta-strands. Soluble oligomers may represent an intermediate stage on the path to fibril formation. Copper binding may promote oligomerization. Interacts with GRB2, APP, ERI3/PRNPIP and SYN1. Mislocalized cytosolically exposed PrP interacts with MGRN1; this interaction alters MGRN1 subcellular location and causes lysosomal enlargement. Interacts with KIAA1191.

The protein resides in the cell membrane. Its subcellular location is the golgi apparatus. Its primary physiological function is unclear. Has cytoprotective activity against internal or environmental stresses. May play a role in neuronal development and synaptic plasticity. May be required for neuronal myelin sheath maintenance. May play a role in iron uptake and iron homeostasis. Soluble oligomers are toxic to cultured neuroblastoma cells and induce apoptosis (in vitro). Association with GPC1 (via its heparan sulfate chains) targets PRNP to lipid rafts. Also provides Cu(2+) or Zn(2+) for the ascorbate-mediated GPC1 deaminase degradation of its heparan sulfate side chains. This is Major prion protein (PRNP) from Macaca fascicularis (Crab-eating macaque).